The chain runs to 628 residues: Neutral/alkaline invertase 1, mitochondrial (628 aa).

A mitochondrion-targeting transit peptide spans 1 to 35 (MAAAAISHLRRGAPRHARALLYLSTRRFSSSSAAG). Residues 79 to 90 (ASSAPPLESPPI) are compositionally biased toward low complexity. Residues 79 to 113 (ASSAPPLESPPIEELPDDATPPPEEEPGLPAPEKD) are disordered.

The protein belongs to the glycosyl hydrolase 100 family. As to expression, expressed in roots, leaf and stems.

The protein localises to the mitochondrion. It catalyses the reaction Hydrolysis of terminal non-reducing beta-D-fructofuranoside residues in beta-D-fructofuranosides.. Functionally, mitochondrial invertase that cleaves sucrose into glucose and fructose. In Oryza sativa subsp. japonica (Rice), this protein is Neutral/alkaline invertase 1, mitochondrial.